A 268-amino-acid polypeptide reads, in one-letter code: Tryptophan synthase alpha chain (268 aa).

Residues glutamate 49 and aspartate 60 each act as proton acceptor in the active site.

This sequence belongs to the TrpA family. In terms of assembly, tetramer of two alpha and two beta chains.

The enzyme catalyses (1S,2R)-1-C-(indol-3-yl)glycerol 3-phosphate + L-serine = D-glyceraldehyde 3-phosphate + L-tryptophan + H2O. Its pathway is amino-acid biosynthesis; L-tryptophan biosynthesis; L-tryptophan from chorismate: step 5/5. Functionally, the alpha subunit is responsible for the aldol cleavage of indoleglycerol phosphate to indole and glyceraldehyde 3-phosphate. The chain is Tryptophan synthase alpha chain from Escherichia coli (strain SE11).